A 258-amino-acid chain; its full sequence is Ribosomal RNA small subunit methyltransferase J (258 aa).

Residues 106–107, 122–123, and Asp-181 each bind S-adenosyl-L-methionine; these read RD and ER.

It belongs to the methyltransferase superfamily. RsmJ family.

It localises to the cytoplasm. It catalyses the reaction guanosine(1516) in 16S rRNA + S-adenosyl-L-methionine = N(2)-methylguanosine(1516) in 16S rRNA + S-adenosyl-L-homocysteine + H(+). In terms of biological role, specifically methylates the guanosine in position 1516 of 16S rRNA. In Pseudoalteromonas atlantica (strain T6c / ATCC BAA-1087), this protein is Ribosomal RNA small subunit methyltransferase J.